The following is a 216-amino-acid chain: 2-hydroxy-3-keto-5-methylthiopentenyl-1-phosphate phosphatase (216 aa).

This sequence belongs to the HAD-like hydrolase superfamily. MtnX family.

The catalysed reaction is 2-hydroxy-5-methylsulfanyl-3-oxopent-1-enyl phosphate + H2O = 1,2-dihydroxy-5-(methylsulfanyl)pent-1-en-3-one + phosphate. Its pathway is amino-acid biosynthesis; L-methionine biosynthesis via salvage pathway; L-methionine from S-methyl-5-thio-alpha-D-ribose 1-phosphate: step 4/6. Its function is as follows. Dephosphorylates 2-hydroxy-3-keto-5-methylthiopentenyl-1-phosphate (HK-MTPenyl-1-P) yielding 1,2-dihydroxy-3-keto-5-methylthiopentene (DHK-MTPene). This chain is 2-hydroxy-3-keto-5-methylthiopentenyl-1-phosphate phosphatase, found in Exiguobacterium sp. (strain ATCC BAA-1283 / AT1b).